A 212-amino-acid chain; its full sequence is Probable GTP-binding protein EngB (212 aa).

The EngB-type G domain maps to Thr23 to Leu197. Residues Gly31–Ser38, Gly58–Leu62, Asp76–Gly79, Thr143–Asp146, and Phe176–Ser178 contribute to the GTP site. Mg(2+) contacts are provided by Ser38 and Thr60.

This sequence belongs to the TRAFAC class TrmE-Era-EngA-EngB-Septin-like GTPase superfamily. EngB GTPase family. The cofactor is Mg(2+).

Necessary for normal cell division and for the maintenance of normal septation. The sequence is that of Probable GTP-binding protein EngB from Alteromonas mediterranea (strain DSM 17117 / CIP 110805 / LMG 28347 / Deep ecotype).